Consider the following 122-residue polypeptide: Large ribosomal subunit protein uL14c (122 aa).

Belongs to the universal ribosomal protein uL14 family. As to quaternary structure, part of the 50S ribosomal subunit.

It localises to the plastid. The protein resides in the chloroplast. Functionally, binds to 23S rRNA. This Piper cenocladum (Ant piper) protein is Large ribosomal subunit protein uL14c.